The following is a 152-amino-acid chain: Ribonuclease H (152 aa).

An RNase H type-1 domain is found at 4-145 (SRSMVEIFSD…CDELARQAIA (142 aa)). 4 residues coordinate Mg(2+): aspartate 13, glutamate 51, aspartate 73, and aspartate 137.

Belongs to the RNase H family. As to quaternary structure, monomer. Requires Mg(2+) as cofactor.

The protein resides in the cytoplasm. It carries out the reaction Endonucleolytic cleavage to 5'-phosphomonoester.. Endonuclease that specifically degrades the RNA of RNA-DNA hybrids. This Syntrophotalea carbinolica (strain DSM 2380 / NBRC 103641 / GraBd1) (Pelobacter carbinolicus) protein is Ribonuclease H.